We begin with the raw amino-acid sequence, 351 residues long: Probable dual-specificity RNA methyltransferase RlmN (351 aa).

Residue E97 is the Proton acceptor of the active site. Residues 103-337 (YDYGNTVCIS…VTVRKERGVD (235 aa)) enclose the Radical SAM core domain. Cysteines 110 and 342 form a disulfide. Residues C117, C121, and C124 each contribute to the [4Fe-4S] cluster site. S-adenosyl-L-methionine-binding positions include 166–167 (GE), S198, 221–223 (SLH), and N299. C342 functions as the S-methylcysteine intermediate in the catalytic mechanism.

It belongs to the radical SAM superfamily. RlmN family. The cofactor is [4Fe-4S] cluster.

The protein localises to the cytoplasm. The catalysed reaction is adenosine(2503) in 23S rRNA + 2 reduced [2Fe-2S]-[ferredoxin] + 2 S-adenosyl-L-methionine = 2-methyladenosine(2503) in 23S rRNA + 5'-deoxyadenosine + L-methionine + 2 oxidized [2Fe-2S]-[ferredoxin] + S-adenosyl-L-homocysteine. It catalyses the reaction adenosine(37) in tRNA + 2 reduced [2Fe-2S]-[ferredoxin] + 2 S-adenosyl-L-methionine = 2-methyladenosine(37) in tRNA + 5'-deoxyadenosine + L-methionine + 2 oxidized [2Fe-2S]-[ferredoxin] + S-adenosyl-L-homocysteine. Its function is as follows. Specifically methylates position 2 of adenine 2503 in 23S rRNA and position 2 of adenine 37 in tRNAs. This Natranaerobius thermophilus (strain ATCC BAA-1301 / DSM 18059 / JW/NM-WN-LF) protein is Probable dual-specificity RNA methyltransferase RlmN.